The primary structure comprises 275 residues: Ribosomal RNA small subunit methyltransferase A (275 aa).

Positions 19, 21, 46, 71, 94, and 117 each coordinate S-adenosyl-L-methionine.

Belongs to the class I-like SAM-binding methyltransferase superfamily. rRNA adenine N(6)-methyltransferase family. RsmA subfamily.

The protein resides in the cytoplasm. It carries out the reaction adenosine(1518)/adenosine(1519) in 16S rRNA + 4 S-adenosyl-L-methionine = N(6)-dimethyladenosine(1518)/N(6)-dimethyladenosine(1519) in 16S rRNA + 4 S-adenosyl-L-homocysteine + 4 H(+). Specifically dimethylates two adjacent adenosines (A1518 and A1519) in the loop of a conserved hairpin near the 3'-end of 16S rRNA in the 30S particle. May play a critical role in biogenesis of 30S subunits. This is Ribosomal RNA small subunit methyltransferase A from Burkholderia orbicola (strain MC0-3).